The following is a 212-amino-acid chain: Pyrrolidone-carboxylate peptidase (212 aa).

Catalysis depends on residues E78, C141, and H165.

The protein belongs to the peptidase C15 family. As to quaternary structure, homotetramer.

The protein localises to the cytoplasm. It catalyses the reaction Release of an N-terminal pyroglutamyl group from a polypeptide, the second amino acid generally not being Pro.. Removes 5-oxoproline from various penultimate amino acid residues except L-proline. The chain is Pyrrolidone-carboxylate peptidase from Staphylococcus aureus (strain bovine RF122 / ET3-1).